Consider the following 156-residue polypeptide: Ribosomal RNA large subunit methyltransferase H (156 aa).

Residues Leu-73, Gly-104, and 123 to 128 contribute to the S-adenosyl-L-methionine site; that span reads LSALTL.

Belongs to the RNA methyltransferase RlmH family. In terms of assembly, homodimer.

The protein localises to the cytoplasm. It catalyses the reaction pseudouridine(1915) in 23S rRNA + S-adenosyl-L-methionine = N(3)-methylpseudouridine(1915) in 23S rRNA + S-adenosyl-L-homocysteine + H(+). In terms of biological role, specifically methylates the pseudouridine at position 1915 (m3Psi1915) in 23S rRNA. The sequence is that of Ribosomal RNA large subunit methyltransferase H from Shewanella woodyi (strain ATCC 51908 / MS32).